Here is a 314-residue protein sequence, read N- to C-terminus: Olfactory receptor 5B12 (314 aa).

Topologically, residues 1-23 are extracellular; it reads MENNTEVTEFILVGLTDDPELQI. The N-linked (GlcNAc...) asparagine glycan is linked to N3. Residues 24-44 traverse the membrane as a helical segment; sequence PLFIVFLFIYLITLVGNLGMI. Residues 45–52 lie on the Cytoplasmic side of the membrane; it reads ELILLDSC. The chain crosses the membrane as a helical span at residues 53 to 73; the sequence is LHTPMYFFLSNLSLVDFGYSS. Residues 74-97 are Extracellular-facing; that stretch reads AVTPKVMVGFLTGDKFILYNACAT. A disulfide bridge connects residues C95 and C187. Residues 98–118 traverse the membrane as a helical segment; sequence QFFFFVAFITAESFLLASMAY. Over 119-137 the chain is Cytoplasmic; sequence DRYAALCKPLHYTTTMTTN. The helical transmembrane segment at 138–158 threads the bilayer; that stretch reads VCACLAIGSYICGFLNASIHT. Topologically, residues 159–194 are extracellular; sequence GNTFRLSFCRSNVVEHFFCDAPPLLTLSCSDNYISE. Residues 195–215 traverse the membrane as a helical segment; sequence MVIFFVVGFNDLFSILVILIS. Topologically, residues 216–235 are cytoplasmic; sequence YLFIFITIMKMRSPEGRQKA. The helical transmembrane segment at 236-256 threads the bilayer; the sequence is FSTCASHLTAVSIFYGTGIFM. The Extracellular portion of the chain corresponds to 257–269; the sequence is YLRPNSSHFMGTD. N261 carries an N-linked (GlcNAc...) asparagine glycan. The helical transmembrane segment at 270–290 threads the bilayer; that stretch reads KMASVFYAIVIPMLNPLVYSL. At 291–314 the chain is on the cytoplasmic side; the sequence is RNKEVKSAFKKTVGKAKASIGFIF.

The protein belongs to the G-protein coupled receptor 1 family.

The protein resides in the cell membrane. Odorant receptor. This Homo sapiens (Human) protein is Olfactory receptor 5B12 (OR5B12).